The primary structure comprises 194 residues: RNA polymerase II subunit A C-terminal domain phosphatase SSU72 like protein 3 (194 aa).

It belongs to the SSU72 phosphatase family.

Its subcellular location is the nucleus. The catalysed reaction is O-phospho-L-seryl-[protein] + H2O = L-seryl-[protein] + phosphate. It carries out the reaction O-phospho-L-threonyl-[protein] + H2O = L-threonyl-[protein] + phosphate. Protein phosphatase that catalyzes the dephosphorylation of the C-terminal domain of RNA polymerase II. Plays a role in RNA processing and termination. The chain is RNA polymerase II subunit A C-terminal domain phosphatase SSU72 like protein 3 from Homo sapiens (Human).